Consider the following 517-residue polypeptide: Beta-glucosidase 17 (517 aa).

A signal peptide spans 1–23 (MAIKSIFIIIIISIITSISELYA). A beta-D-glucoside is bound by residues glutamine 54, histidine 158, and 203 to 204 (NE). The Proton donor role is filled by glutamate 204. Cysteine 223 and cysteine 230 form a disulfide bridge. N-linked (GlcNAc...) asparagine glycosylation occurs at asparagine 229. Tyrosine 346 contributes to the a beta-D-glucoside binding site. 2 N-linked (GlcNAc...) asparagine glycosylation sites follow: asparagine 361 and asparagine 371. A beta-D-glucoside is bound by residues glutamate 417, tryptophan 466, 473-474 (EW), and tyrosine 482. Residue glutamate 417 is the Nucleophile of the active site. Asparagine 510 carries N-linked (GlcNAc...) asparagine glycosylation.

The protein belongs to the glycosyl hydrolase 1 family.

The catalysed reaction is Hydrolysis of terminal, non-reducing beta-D-glucosyl residues with release of beta-D-glucose.. The protein is Beta-glucosidase 17 of Arabidopsis thaliana (Mouse-ear cress).